Reading from the N-terminus, the 400-residue chain is Aminomethyltransferase, mitochondrial (400 aa).

Residues Glu221, Arg250, and Tyr397 each coordinate substrate.

The protein belongs to the GcvT family. Component of the glycine decarboxylase complex (GDC), which is composed of four proteins: P, T, L and H.

It localises to the mitochondrion. It carries out the reaction N(6)-[(R)-S(8)-aminomethyldihydrolipoyl]-L-lysyl-[protein] + (6S)-5,6,7,8-tetrahydrofolate = N(6)-[(R)-dihydrolipoyl]-L-lysyl-[protein] + (6R)-5,10-methylene-5,6,7,8-tetrahydrofolate + NH4(+). Functionally, the glycine cleavage system (glycine decarboxylase complex) catalyzes the degradation of glycine. This chain is Aminomethyltransferase, mitochondrial (GCV1), found in Saccharomyces cerevisiae (strain ATCC 204508 / S288c) (Baker's yeast).